A 430-amino-acid chain; its full sequence is Adenylosuccinate synthetase (430 aa).

GTP is bound by residues 12–18 and 40–42; these read GDEGKGK and GHT. The active-site Proton acceptor is the D13. Mg(2+) contacts are provided by D13 and G40. Residues 13-16, 38-41, T130, R144, Q224, T239, and R303 contribute to the IMP site; these read DEGK and NAGH. H41 (proton donor) is an active-site residue. Residue 299–305 coordinates substrate; the sequence is TVTGRKR. GTP-binding positions include R305, 331 to 333, and 413 to 415; these read KLD and STS.

Belongs to the adenylosuccinate synthetase family. Homodimer. Mg(2+) serves as cofactor.

Its subcellular location is the cytoplasm. It catalyses the reaction IMP + L-aspartate + GTP = N(6)-(1,2-dicarboxyethyl)-AMP + GDP + phosphate + 2 H(+). It participates in purine metabolism; AMP biosynthesis via de novo pathway; AMP from IMP: step 1/2. Its function is as follows. Plays an important role in the de novo pathway of purine nucleotide biosynthesis. Catalyzes the first committed step in the biosynthesis of AMP from IMP. The polypeptide is Adenylosuccinate synthetase (Cereibacter sphaeroides (strain ATCC 17029 / ATH 2.4.9) (Rhodobacter sphaeroides)).